The sequence spans 296 residues: 4-hydroxy-tetrahydrodipicolinate synthase (296 aa).

Residue Thr-47 participates in pyruvate binding. The active-site Proton donor/acceptor is the Tyr-135. Catalysis depends on Lys-163, which acts as the Schiff-base intermediate with substrate. Residue Ile-205 coordinates pyruvate.

It belongs to the DapA family. As to quaternary structure, homotetramer; dimer of dimers.

Its subcellular location is the cytoplasm. It carries out the reaction L-aspartate 4-semialdehyde + pyruvate = (2S,4S)-4-hydroxy-2,3,4,5-tetrahydrodipicolinate + H2O + H(+). It participates in amino-acid biosynthesis; L-lysine biosynthesis via DAP pathway; (S)-tetrahydrodipicolinate from L-aspartate: step 3/4. In terms of biological role, catalyzes the condensation of (S)-aspartate-beta-semialdehyde [(S)-ASA] and pyruvate to 4-hydroxy-tetrahydrodipicolinate (HTPA). In Macrococcus caseolyticus (strain JCSC5402) (Macrococcoides caseolyticum), this protein is 4-hydroxy-tetrahydrodipicolinate synthase.